The following is a 285-amino-acid chain: Eukaryotic translation initiation factor 3 subunit F-2 (285 aa).

The 135-residue stretch at 11 to 145 (VFIKPLVLFQ…TRLYCAVEIG (135 aa)) folds into the MPN domain.

Belongs to the eIF-3 subunit F family. In terms of assembly, component of the eukaryotic translation initiation factor 3 (eIF-3) complex. The eIF-3 complex interacts with pix.

It is found in the cytoplasm. Functionally, component of the eukaryotic translation initiation factor 3 (eIF-3) complex, which is involved in protein synthesis of a specialized repertoire of mRNAs and, together with other initiation factors, stimulates binding of mRNA and methionyl-tRNAi to the 40S ribosome. The eIF-3 complex specifically targets and initiates translation of a subset of mRNAs involved in cell proliferation. The sequence is that of Eukaryotic translation initiation factor 3 subunit F-2 from Drosophila yakuba (Fruit fly).